The chain runs to 166 residues: Crossover junction endodeoxyribonuclease RuvC (166 aa).

Residues Asp7, Glu68, and Asp141 contribute to the active site. The Mg(2+) site is built by Asp7, Glu68, and Asp141.

This sequence belongs to the RuvC family. Homodimer which binds Holliday junction (HJ) DNA. The HJ becomes 2-fold symmetrical on binding to RuvC with unstacked arms; it has a different conformation from HJ DNA in complex with RuvA. In the full resolvosome a probable DNA-RuvA(4)-RuvB(12)-RuvC(2) complex forms which resolves the HJ. It depends on Mg(2+) as a cofactor.

The protein resides in the cytoplasm. The catalysed reaction is Endonucleolytic cleavage at a junction such as a reciprocal single-stranded crossover between two homologous DNA duplexes (Holliday junction).. In terms of biological role, the RuvA-RuvB-RuvC complex processes Holliday junction (HJ) DNA during genetic recombination and DNA repair. Endonuclease that resolves HJ intermediates. Cleaves cruciform DNA by making single-stranded nicks across the HJ at symmetrical positions within the homologous arms, yielding a 5'-phosphate and a 3'-hydroxyl group; requires a central core of homology in the junction. The consensus cleavage sequence is 5'-(A/T)TT(C/G)-3'. Cleavage occurs on the 3'-side of the TT dinucleotide at the point of strand exchange. HJ branch migration catalyzed by RuvA-RuvB allows RuvC to scan DNA until it finds its consensus sequence, where it cleaves and resolves the cruciform DNA. This chain is Crossover junction endodeoxyribonuclease RuvC, found in Caldicellulosiruptor saccharolyticus (strain ATCC 43494 / DSM 8903 / Tp8T 6331).